A 587-amino-acid chain; its full sequence is Pectinesterase 2 (587 aa).

An N-terminal signal peptide occupies residues 1-40 (MAPIKEFISKFSDFKNNKKLILSSAAIALLLLASIVGIAA). Asn-99 and Asn-218 each carry an N-linked (GlcNAc...) asparagine glycan. Substrate contacts are provided by Thr-351 and Gln-381. The active-site Proton donor is Asp-404. Cys-418 and Cys-438 form a disulfide bridge. The Nucleophile role is filled by Asp-425. The substrate site is built by Arg-493 and Trp-495.

It in the N-terminal section; belongs to the PMEI family. In the C-terminal section; belongs to the pectinesterase family. In terms of tissue distribution, expressed in flower buds.

The protein resides in the secreted. Its subcellular location is the cell wall. It catalyses the reaction [(1-&gt;4)-alpha-D-galacturonosyl methyl ester](n) + n H2O = [(1-&gt;4)-alpha-D-galacturonosyl](n) + n methanol + n H(+). Its pathway is glycan metabolism; pectin degradation; 2-dehydro-3-deoxy-D-gluconate from pectin: step 1/5. Functionally, acts in the modification of cell walls via demethylesterification of cell wall pectin. The chain is Pectinesterase 2 (PME2) from Arabidopsis thaliana (Mouse-ear cress).